The sequence spans 257 residues: Ribonuclease HII (257 aa).

An RNase H type-2 domain is found at 72–257 (TYIAGIDEVG…FAPIKDMIQK (186 aa)). Positions 78, 79, and 170 each coordinate a divalent metal cation.

It belongs to the RNase HII family. Requires Mn(2+) as cofactor. The cofactor is Mg(2+).

Its subcellular location is the cytoplasm. It carries out the reaction Endonucleolytic cleavage to 5'-phosphomonoester.. Endonuclease that specifically degrades the RNA of RNA-DNA hybrids. This Bacillus thuringiensis (strain Al Hakam) protein is Ribonuclease HII.